The following is a 319-amino-acid chain: Mitochondrial fission regulator 1-like-A (319 aa).

The interval methionine 1–threonine 37 is disordered. Over residues glutamate 9–arginine 30 the composition is skewed to basic and acidic residues.

It belongs to the MTFR1 family.

The protein localises to the mitochondrion outer membrane. Its function is as follows. Mitochondrial protein required for adaptation of miochondrial dynamics to metabolic changes. Regulates mitochondrial morphology at steady state and mediates AMPK-dependent stress-induced mitochondrial fragmentation via the control of OPA1 levels. In Xenopus laevis (African clawed frog), this protein is Mitochondrial fission regulator 1-like-A (mtfr1l-a).